A 211-amino-acid polypeptide reads, in one-letter code: Large ribosomal subunit protein uL3 (211 aa).

It belongs to the universal ribosomal protein uL3 family. In terms of assembly, part of the 50S ribosomal subunit. Forms a cluster with proteins L14 and L19.

One of the primary rRNA binding proteins, it binds directly near the 3'-end of the 23S rRNA, where it nucleates assembly of the 50S subunit. The polypeptide is Large ribosomal subunit protein uL3 (Citrifermentans bemidjiense (strain ATCC BAA-1014 / DSM 16622 / JCM 12645 / Bem) (Geobacter bemidjiensis)).